The following is a 142-amino-acid chain: UPF0102 protein Bcen2424_0290 (142 aa).

Residues 1-19 (MCHAAPARPEGARGRPPSG) show a composition bias toward low complexity. The interval 1-27 (MCHAAPARPEGARGRPPSGDNFSGAAR) is disordered.

It belongs to the UPF0102 family.

This Burkholderia cenocepacia (strain HI2424) protein is UPF0102 protein Bcen2424_0290.